Here is a 638-residue protein sequence, read N- to C-terminus: DNA gyrase subunit B (638 aa).

Residues 422–536 (SELYIVEGDS…NGYVYIAQPP (115 aa)) enclose the Toprim domain. Residues Glu-428, Asp-501, and Asp-503 each contribute to the Mg(2+) site.

It belongs to the type II topoisomerase GyrB family. As to quaternary structure, heterotetramer, composed of two GyrA and two GyrB chains. In the heterotetramer, GyrA contains the active site tyrosine that forms a transient covalent intermediate with DNA, while GyrB binds cofactors and catalyzes ATP hydrolysis. Requires Mg(2+) as cofactor. Mn(2+) serves as cofactor. The cofactor is Ca(2+).

It localises to the cytoplasm. It catalyses the reaction ATP-dependent breakage, passage and rejoining of double-stranded DNA.. A type II topoisomerase that negatively supercoils closed circular double-stranded (ds) DNA in an ATP-dependent manner to modulate DNA topology and maintain chromosomes in an underwound state. Negative supercoiling favors strand separation, and DNA replication, transcription, recombination and repair, all of which involve strand separation. Also able to catalyze the interconversion of other topological isomers of dsDNA rings, including catenanes and knotted rings. Type II topoisomerases break and join 2 DNA strands simultaneously in an ATP-dependent manner. The polypeptide is DNA gyrase subunit B (Bacillus subtilis (strain 168)).